Here is a 195-residue protein sequence, read N- to C-terminus: Peptidyl-tRNA hydrolase (195 aa).

Tyrosine 17 contacts tRNA. The active-site Proton acceptor is the histidine 22. The tRNA site is built by tyrosine 68, asparagine 70, and asparagine 116.

It belongs to the PTH family. As to quaternary structure, monomer.

It is found in the cytoplasm. It catalyses the reaction an N-acyl-L-alpha-aminoacyl-tRNA + H2O = an N-acyl-L-amino acid + a tRNA + H(+). In terms of biological role, hydrolyzes ribosome-free peptidyl-tRNAs (with 1 or more amino acids incorporated), which drop off the ribosome during protein synthesis, or as a result of ribosome stalling. Its function is as follows. Catalyzes the release of premature peptidyl moieties from peptidyl-tRNA molecules trapped in stalled 50S ribosomal subunits, and thus maintains levels of free tRNAs and 50S ribosomes. In Shewanella sp. (strain MR-4), this protein is Peptidyl-tRNA hydrolase.